Reading from the N-terminus, the 87-residue chain is MEWKKEKFKKMFPNLFHEIEGSDLPTVLDHLEVCKTIEEAIEIIEYFEKRGEISKEYANFLKSNPSLLKSIIGTRERGEYTRRGLRD.

The protein to A.fulgidus AF_0255 and AF_1348.

This is an uncharacterized protein from Archaeoglobus fulgidus (strain ATCC 49558 / DSM 4304 / JCM 9628 / NBRC 100126 / VC-16).